The chain runs to 324 residues: Glyoxylate/hydroxypyruvate reductase B (324 aa).

Catalysis depends on residues Arg237 and Glu266. Residue His285 is the Proton donor of the active site.

This sequence belongs to the D-isomer specific 2-hydroxyacid dehydrogenase family. GhrB subfamily. As to quaternary structure, homodimer.

Its subcellular location is the cytoplasm. The catalysed reaction is glycolate + NADP(+) = glyoxylate + NADPH + H(+). The enzyme catalyses (R)-glycerate + NAD(+) = 3-hydroxypyruvate + NADH + H(+). It carries out the reaction (R)-glycerate + NADP(+) = 3-hydroxypyruvate + NADPH + H(+). In terms of biological role, catalyzes the NADPH-dependent reduction of glyoxylate and hydroxypyruvate into glycolate and glycerate, respectively. The sequence is that of Glyoxylate/hydroxypyruvate reductase B from Escherichia coli O6:K15:H31 (strain 536 / UPEC).